We begin with the raw amino-acid sequence, 422 residues long: Probable Na(+)/H(+) antiporter 2 (422 aa).

The next 13 helical transmembrane spans lie at 3–23 (IVLF…IAKI), 28–48 (GIPD…LNVI), 52–72 (IVES…LFIG), 93–113 (ILAL…VFHL), 119–139 (IGLL…IPIF), 157–177 (VFND…LGLA), 183–203 (ILEF…AGKF), 216–236 (YIAP…EGIF), 242–262 (YEIS…NVIV), 281–301 (LSIF…SIPL), 307–327 (LPAF…GVLI), 341–361 (IYLA…AMVY), and 384–404 (LAGT…VLEA).

This sequence belongs to the monovalent cation:proton antiporter 1 (CPA1) transporter (TC 2.A.36) family.

Its subcellular location is the cell membrane. Its function is as follows. This is probably a Na(+)/H(+) antiporter. The sequence is that of Probable Na(+)/H(+) antiporter 2 from Methanocaldococcus jannaschii (strain ATCC 43067 / DSM 2661 / JAL-1 / JCM 10045 / NBRC 100440) (Methanococcus jannaschii).